The chain runs to 615 residues: Dihydroxy-acid dehydratase (615 aa).

Residue Asp81 participates in Mg(2+) binding. Cys122 provides a ligand contact to [2Fe-2S] cluster. Positions 123 and 124 each coordinate Mg(2+). Lys124 carries the post-translational modification N6-carboxylysine. Cys195 contacts [2Fe-2S] cluster. Mg(2+) is bound at residue Glu491. Ser517 (proton acceptor) is an active-site residue.

Belongs to the IlvD/Edd family. Homodimer. [2Fe-2S] cluster serves as cofactor. The cofactor is Mg(2+).

It carries out the reaction (2R)-2,3-dihydroxy-3-methylbutanoate = 3-methyl-2-oxobutanoate + H2O. It catalyses the reaction (2R,3R)-2,3-dihydroxy-3-methylpentanoate = (S)-3-methyl-2-oxopentanoate + H2O. It participates in amino-acid biosynthesis; L-isoleucine biosynthesis; L-isoleucine from 2-oxobutanoate: step 3/4. The protein operates within amino-acid biosynthesis; L-valine biosynthesis; L-valine from pyruvate: step 3/4. In terms of biological role, functions in the biosynthesis of branched-chain amino acids. Catalyzes the dehydration of (2R,3R)-2,3-dihydroxy-3-methylpentanoate (2,3-dihydroxy-3-methylvalerate) into 2-oxo-3-methylpentanoate (2-oxo-3-methylvalerate) and of (2R)-2,3-dihydroxy-3-methylbutanoate (2,3-dihydroxyisovalerate) into 2-oxo-3-methylbutanoate (2-oxoisovalerate), the penultimate precursor to L-isoleucine and L-valine, respectively. The sequence is that of Dihydroxy-acid dehydratase from Shewanella halifaxensis (strain HAW-EB4).